The chain runs to 166 residues: Large ribosomal subunit protein uL10 (166 aa).

Belongs to the universal ribosomal protein uL10 family. As to quaternary structure, part of the ribosomal stalk of the 50S ribosomal subunit. The N-terminus interacts with L11 and the large rRNA to form the base of the stalk. The C-terminus forms an elongated spine to which L12 dimers bind in a sequential fashion forming a multimeric L10(L12)X complex.

Forms part of the ribosomal stalk, playing a central role in the interaction of the ribosome with GTP-bound translation factors. This chain is Large ribosomal subunit protein uL10, found in Marinomonas sp. (strain MWYL1).